The sequence spans 144 residues: Deoxyuridine 5'-triphosphate nucleotidohydrolase (144 aa).

Substrate-binding positions include 63 to 65 (RSG), N76, 80 to 82 (TID), and K90.

Belongs to the dUTPase family. Mg(2+) is required as a cofactor.

The catalysed reaction is dUTP + H2O = dUMP + diphosphate + H(+). The protein operates within pyrimidine metabolism; dUMP biosynthesis; dUMP from dCTP (dUTP route): step 2/2. In terms of biological role, this enzyme is involved in nucleotide metabolism: it produces dUMP, the immediate precursor of thymidine nucleotides and it decreases the intracellular concentration of dUTP so that uracil cannot be incorporated into DNA. The protein is Deoxyuridine 5'-triphosphate nucleotidohydrolase of Hydrogenobaculum sp. (strain Y04AAS1).